Reading from the N-terminus, the 395-residue chain is MATVDRWLLPDGIEEVLPPEAARIEVARRQVLDLFQSWGYEFVVTPHIEYLESLLTGAGSDLDLRTFKVIDPQSGRQMGFRADITPQVARIDAHTLKREGPSRLCYAGSVLHAQPRALSSSRSPIQLGAELYGDASPSSDVEVISLMLAMLQLADVPDVHMDLGHVGIYRGLARAAGLSGEVEQQLFDALQRKAIDEVIALTADLPQELATMLRALVDLCGGREVLDAARDRLAGAPAPVLAALDDLLSIAERLAARFPQLPLYFDLGELRGYHYHTGVVFAVFVPGVGQSIAQGGRYDDIGADFGRARPATGFSTDLKTLVTLGQAEIVLPSGGIWVPDSTDAALWQMVCQLRSEGQRVVQALPGQQASAAREADCDRQLIQHGEHWQVMPLAS.

The protein belongs to the class-II aminoacyl-tRNA synthetase family. HisZ subfamily. As to quaternary structure, heteromultimer composed of HisG and HisZ subunits.

The protein resides in the cytoplasm. It functions in the pathway amino-acid biosynthesis; L-histidine biosynthesis; L-histidine from 5-phospho-alpha-D-ribose 1-diphosphate: step 1/9. Functionally, required for the first step of histidine biosynthesis. May allow the feedback regulation of ATP phosphoribosyltransferase activity by histidine. The protein is ATP phosphoribosyltransferase regulatory subunit of Pseudomonas syringae pv. syringae (strain B728a).